Reading from the N-terminus, the 568-residue chain is Cytosolic purine 5'-nucleotidase (568 aa).

Asp-52 acts as the Nucleophile in catalysis. Positions 52 and 54 each coordinate IMP. Positions 52 and 54 each coordinate Mg(2+). Asp-54 (proton donor) is an active-site residue. ATP contacts are provided by Arg-144 and Asn-154. The IMP site is built by Arg-202, Asp-206, Lys-215, Thr-249, Asn-250, Ser-251, and Lys-292. Asp-351 is a binding site for Mg(2+). Residues Gln-453 and Arg-456 each contribute to the ATP site. The segment at 528 to 568 (ISEIKPPNLFPQKPQEITHCHDEDDDEEEEEEEEEEEEEEE) is disordered. Residues 548–568 (HDEDDDEEEEEEEEEEEEEEE) form a required for tetramer assembly region. Residues 550-568 (EDDDEEEEEEEEEEEEEEE) show a composition bias toward acidic residues.

It belongs to the 5'(3')-deoxyribonucleotidase family. In terms of assembly, homotetramer. The cofactor is Mg(2+).

It localises to the cytoplasm. The protein localises to the cytosol. The enzyme catalyses a ribonucleoside 5'-phosphate + H2O = a ribonucleoside + phosphate. It carries out the reaction a 2'-deoxyribonucleoside + a ribonucleoside 5'-phosphate = a ribonucleoside + a 2'-deoxyribonucleoside 5'-phosphate. The catalysed reaction is IMP + H2O = inosine + phosphate. It catalyses the reaction GMP + H2O = guanosine + phosphate. The enzyme catalyses dIMP + H2O = 2'-deoxyinosine + phosphate. It carries out the reaction dGMP + H2O = 2'-deoxyguanosine + phosphate. The catalysed reaction is XMP + H2O = xanthosine + phosphate. It catalyses the reaction inosine + GMP = guanosine + IMP. The enzyme catalyses dGMP + inosine = 2'-deoxyguanosine + IMP. It carries out the reaction dIMP + inosine = 2'-deoxyinosine + IMP. The catalysed reaction is inosine + UMP = uridine + IMP. It catalyses the reaction inosine + CMP = cytidine + IMP. The enzyme catalyses inosine + AMP = IMP + adenosine. With respect to regulation, allosterically activated by various compounds including ATP, 2,3-BPG/2,3-Bisphosphoglyceric acid and Ap4A/P1,P4-bis(5'-adenosyl) tetraphosphate. Binding of an allosteric activator is a prerequisiste to magnesium and substrate binding. Inhibited by inorganic phosphate. In terms of biological role, broad specificity cytosolic 5'-nucleotidase that catalyzes the dephosphorylation of 6-hydroxypurine nucleoside 5'-monophosphates. In addition, possesses a phosphotransferase activity by which it can transfer a phosphate from a donor nucleoside monophosphate to an acceptor nucleoside, preferably inosine, deoxyinosine and guanosine. Has the highest activities for IMP and GMP followed by dIMP, dGMP and XMP. Could also catalyze the transfer of phosphates from pyrimidine monophosphates but with lower efficiency. Through these activities regulates the purine nucleoside/nucleotide pools within the cell. This chain is Cytosolic purine 5'-nucleotidase (nt5c2), found in Xenopus tropicalis (Western clawed frog).